Consider the following 211-residue polypeptide: 2,3-bisphosphoglycerate-dependent phosphoglycerate mutase (211 aa).

Residues 9–16 (RHGQSEWN), 22–23 (TG), Arg61, 88–91 (ERDY), Lys99, 115–116 (RR), and 159–160 (GN) each bind substrate. The active-site Tele-phosphohistidine intermediate is the His10. Residue Glu88 is the Proton donor/acceptor of the active site.

This sequence belongs to the phosphoglycerate mutase family. BPG-dependent PGAM subfamily. Homodimer.

It catalyses the reaction (2R)-2-phosphoglycerate = (2R)-3-phosphoglycerate. It functions in the pathway carbohydrate degradation; glycolysis; pyruvate from D-glyceraldehyde 3-phosphate: step 3/5. Functionally, catalyzes the interconversion of 2-phosphoglycerate and 3-phosphoglycerate. The chain is 2,3-bisphosphoglycerate-dependent phosphoglycerate mutase from Sinorhizobium fredii (strain NBRC 101917 / NGR234).